Reading from the N-terminus, the 1155-residue chain is uncharacterized protein (1155 aa).

Residues 1–19 (MKKNIFITSLLILLLLLSS) form the signal peptide. C20 carries the N-palmitoyl cysteine lipid modification. A lipid anchor (S-diacylglycerol cysteine) is attached at C20. 4 helical membrane-spanning segments follow: residues 289 to 309 (ISVS…FLIG), 395 to 415 (LGFI…FLIF), 424 to 444 (ALIT…FMLF), and 459 to 479 (ISYA…SMII).

The protein belongs to the TrbL/VirB6 family.

It is found in the cell membrane. This is an uncharacterized protein from Rickettsia prowazekii (strain Madrid E).